Here is a 443-residue protein sequence, read N- to C-terminus: Methionine aminopeptidase 2-1 (443 aa).

The interval 1 to 90 (MAAQADDELN…RVPVSELFPN (90 aa)) is disordered. A compositionally biased stretch (acidic residues) spans 33–48 (ADNDDSEDDEKEEEGG). Residues 58-73 (KKKKKRKPKKKKKGGA) show a composition bias toward basic residues. His196 provides a ligand contact to substrate. Positions 216, 227, and 296 each coordinate a divalent metal cation. Residue His304 participates in substrate binding. A divalent metal cation contacts are provided by Glu329 and Glu424.

This sequence belongs to the peptidase M24A family. Methionine aminopeptidase eukaryotic type 2 subfamily. Co(2+) is required as a cofactor. Zn(2+) serves as cofactor. Requires Mn(2+) as cofactor. The cofactor is Fe(2+).

Its subcellular location is the cytoplasm. The enzyme catalyses Release of N-terminal amino acids, preferentially methionine, from peptides and arylamides.. In terms of biological role, cotranslationally removes the N-terminal methionine from nascent proteins. The N-terminal methionine is often cleaved when the second residue in the primary sequence is small and uncharged (Met-Ala-, Cys, Gly, Pro, Ser, Thr, or Val). The protein is Methionine aminopeptidase 2-1 of Talaromyces stipitatus (strain ATCC 10500 / CBS 375.48 / QM 6759 / NRRL 1006) (Penicillium stipitatum).